Consider the following 156-residue polypeptide: Biotin carboxyl carrier protein of acetyl-CoA carboxylase (156 aa).

The Biotinyl-binding domain occupies 80–156; sequence GNVVRSPMVG…EFDQPLFTIV (77 aa). Position 122 is an N6-biotinyllysine (K122).

Homodimer.

The protein operates within lipid metabolism; fatty acid biosynthesis. In terms of biological role, this protein is a component of the acetyl coenzyme A carboxylase complex; first, biotin carboxylase catalyzes the carboxylation of the carrier protein and then the transcarboxylase transfers the carboxyl group to form malonyl-CoA. The protein is Biotin carboxyl carrier protein of acetyl-CoA carboxylase (accB) of Pseudomonas aeruginosa (strain ATCC 15692 / DSM 22644 / CIP 104116 / JCM 14847 / LMG 12228 / 1C / PRS 101 / PAO1).